The chain runs to 580 residues: MTDDSKDTDLSEDNGFPTDYEIAQNADMTPIWDLLEPWDLGNDDLSYYGEYTAKLSHDAVDHLREEAKTRENNLILVTGMTPTPMGEGKTVTTVGLGQTLNHLDEEAMIAIREPSLGPVFGVKGGAAGGGYSQVLPMEEINLHFTGDLHALTSAHNLIAAMLDAKLSQSDEFDVDVNDISWPRALDMNDRALRETVIGLGGESGGVPREDGFLLTAASELMAVLCLSSDLEDLKMRVSRIIVGYENDGEPITVDDIDATGPVTMLLRDAIEPNVVQTIEGTPAFVHGGPFANIAHGTNSLIADKAAFGMGDYLVTEAGFGSDLGAEKFMNIVCRLGDMTPDAITLVASVRALKYHGLDMWPADIDEINGAGVDALEAGFVNLDKHVTNLQKFGIPVVVAVNRFPNDTDVEVNAVLNHCRNDLNVKAASSTVFAEGSEGGVELAERVIGAVESSDPEDFEYLYPADATIKEKIETVATEIYGAGSVNYSTDAEDDIERMRELGFDTVPVCLSKTFHSLTDDARQKGAPTGWTLNVRKLYPSAGAGFIVALTGDVLTMPGLPADPAAADMDIDADGDITGLF.

ATP is bound at residue 83–90 (TPMGEGKT).

Belongs to the formate--tetrahydrofolate ligase family.

The catalysed reaction is (6S)-5,6,7,8-tetrahydrofolate + formate + ATP = (6R)-10-formyltetrahydrofolate + ADP + phosphate. It functions in the pathway one-carbon metabolism; tetrahydrofolate interconversion. The chain is Formate--tetrahydrofolate ligase from Haloquadratum walsbyi (strain DSM 16790 / HBSQ001).